The sequence spans 148 residues: uncharacterized protein (148 aa).

An N-terminal signal peptide occupies residues Met1–Ser22.

This is an uncharacterized protein from Saccharomyces cerevisiae (strain ATCC 204508 / S288c) (Baker's yeast).